Here is a 250-residue protein sequence, read N- to C-terminus: uncharacterized protein (250 aa).

Residues 207 to 226 (LNDRDAINKSEEARKAREEV) are compositionally biased toward basic and acidic residues. The interval 207–250 (LNDRDAINKSEEARKAREEVFIPSEPSKPSIASKRSSASKSTKS) is disordered. Low complexity predominate over residues 233 to 250 (SKPSIASKRSSASKSTKS).

The protein resides in the plastid. It localises to the chloroplast. This is an uncharacterized protein from Chlorella vulgaris (Green alga).